The primary structure comprises 143 residues: uncharacterized protein (143 aa).

This is an uncharacterized protein from Saccharomyces cerevisiae (strain ATCC 204508 / S288c) (Baker's yeast).